We begin with the raw amino-acid sequence, 121 residues long: Large ribosomal subunit protein bL12 (121 aa).

Belongs to the bacterial ribosomal protein bL12 family. In terms of assembly, homodimer. Part of the ribosomal stalk of the 50S ribosomal subunit. Forms a multimeric L10(L12)X complex, where L10 forms an elongated spine to which 2 to 4 L12 dimers bind in a sequential fashion. Binds GTP-bound translation factors.

Functionally, forms part of the ribosomal stalk which helps the ribosome interact with GTP-bound translation factors. Is thus essential for accurate translation. The polypeptide is Large ribosomal subunit protein bL12 (Streptococcus pyogenes serotype M3 (strain ATCC BAA-595 / MGAS315)).